The following is a 270-amino-acid chain: tRNA 2-(methylsulfanyl)-N(6)-isopentenyladenosine(37) hydroxylase (270 aa).

6 residues coordinate Fe cation: glutamate 59, glutamate 137, histidine 140, glutamate 190, glutamate 219, and histidine 222.

This sequence belongs to the MiaE family. As to quaternary structure, monomer. The cofactor is Fe cation.

It carries out the reaction 2-methylsulfanyl-N(6)-dimethylallyladenosine(37) in tRNA + AH2 + O2 = N(6)-[(2E)-4-hydroxy-3-methylbut-2-en-1-yl]-2-(methylsulfanyl)adenosine(37) in tRNA + A + H2O. Its pathway is tRNA modification; 2-methylthio-N-6-(cis-hydroxy)isopentenyl adenosine-tRNA biosynthesis. Involved in specific tRNA modification. Catalyzes the oxygen-dependent hydroxylation of 2-methylthio-N-6-isopentenyl adenosine (ms2i6A) to produce 2-methylthio-N-6-(cis-hydroxy)isopentenyl adenosine (ms2io6A) at position 37 in tRNAs. Can also use N6-(dimethylallyl)adenosine (i6A) as substrate, with lower efficiency. The presence of the hydroxyl group on the tRNA may regulate the ability of S.typhimurium to grow on the citric acid cycle (CAC) intermediates succinate, fumarate and malate. The polypeptide is tRNA 2-(methylsulfanyl)-N(6)-isopentenyladenosine(37) hydroxylase (Salmonella typhimurium (strain LT2 / SGSC1412 / ATCC 700720)).